A 499-amino-acid polypeptide reads, in one-letter code: Glycerol kinase (499 aa).

Position 12 (Thr-12) interacts with ADP. Residues Thr-12, Thr-13, and Ser-14 each coordinate ATP. Thr-12 lines the sn-glycerol 3-phosphate pocket. ADP is bound at residue Arg-16. Residues Arg-82, Glu-83, and Tyr-134 each coordinate sn-glycerol 3-phosphate. Arg-82, Glu-83, and Tyr-134 together coordinate glycerol. His-230 carries the phosphohistidine; by HPr modification. Asp-244 lines the sn-glycerol 3-phosphate pocket. Positions 244 and 245 each coordinate glycerol. The ADP site is built by Thr-266 and Gly-309. ATP contacts are provided by Thr-266, Gly-309, Gln-313, and Gly-410. The ADP site is built by Gly-410 and Asn-414.

The protein belongs to the FGGY kinase family. In terms of assembly, homotetramer and homodimer (in equilibrium). The phosphoenolpyruvate-dependent sugar phosphotransferase system (PTS), including enzyme I, and histidine-containing protein (HPr) are required for the phosphorylation, which leads to the activation of the enzyme.

It carries out the reaction glycerol + ATP = sn-glycerol 3-phosphate + ADP + H(+). It functions in the pathway polyol metabolism; glycerol degradation via glycerol kinase pathway; sn-glycerol 3-phosphate from glycerol: step 1/1. Its activity is regulated as follows. Activated by phosphorylation and inhibited by fructose 1,6-bisphosphate (FBP). Its function is as follows. Key enzyme in the regulation of glycerol uptake and metabolism. Catalyzes the phosphorylation of glycerol to yield sn-glycerol 3-phosphate. This chain is Glycerol kinase, found in Staphylococcus haemolyticus (strain JCSC1435).